A 129-amino-acid polypeptide reads, in one-letter code: Large-conductance mechanosensitive channel (129 aa).

A run of 3 helical transmembrane segments spans residues 8 to 28 (FAFR…AAFS), 30 to 50 (IIKS…IGGI), and 67 to 87 (GQFL…FLFV).

Belongs to the MscL family. In terms of assembly, homopentamer.

The protein resides in the cell membrane. Channel that opens in response to stretch forces in the membrane lipid bilayer. May participate in the regulation of osmotic pressure changes within the cell. This chain is Large-conductance mechanosensitive channel, found in Exiguobacterium sibiricum (strain DSM 17290 / CCUG 55495 / CIP 109462 / JCM 13490 / 255-15).